A 250-amino-acid polypeptide reads, in one-letter code: Small ribosomal subunit protein uS3 (250 aa).

The KH type-2 domain occupies 39–111; the sequence is IRTLIKNHYP…KVQINIFEVK (73 aa).

It belongs to the universal ribosomal protein uS3 family. In terms of assembly, part of the 30S ribosomal subunit. Forms a tight complex with proteins S10 and S14.

Its function is as follows. Binds the lower part of the 30S subunit head. Binds mRNA in the 70S ribosome, positioning it for translation. In Phytoplasma vitis (Flavescence doree phytoplasma), this protein is Small ribosomal subunit protein uS3.